The sequence spans 125 residues: Large ribosomal subunit protein bL12 (125 aa).

The tract at residues 95–125 (APKPIKEGVDKKTAEEAKKKLEEAGAKAELK) is disordered.

This sequence belongs to the bacterial ribosomal protein bL12 family. Homodimer. Part of the ribosomal stalk of the 50S ribosomal subunit. Forms a multimeric L10(L12)X complex, where L10 forms an elongated spine to which 2 to 4 L12 dimers bind in a sequential fashion. Binds GTP-bound translation factors.

Forms part of the ribosomal stalk which helps the ribosome interact with GTP-bound translation factors. Is thus essential for accurate translation. This is Large ribosomal subunit protein bL12 from Polynucleobacter necessarius subsp. necessarius (strain STIR1).